Reading from the N-terminus, the 527-residue chain is ATP synthase subunit alpha (527 aa).

172 to 179 (GDRQTGKT) lines the ATP pocket.

This sequence belongs to the ATPase alpha/beta chains family. As to quaternary structure, F-type ATPases have 2 components, CF(1) - the catalytic core - and CF(0) - the membrane proton channel. CF(1) has five subunits: alpha(3), beta(3), gamma(1), delta(1), epsilon(1). CF(0) has three main subunits: a(1), b(2) and c(9-12). The alpha and beta chains form an alternating ring which encloses part of the gamma chain. CF(1) is attached to CF(0) by a central stalk formed by the gamma and epsilon chains, while a peripheral stalk is formed by the delta and b chains.

It is found in the cell inner membrane. The enzyme catalyses ATP + H2O + 4 H(+)(in) = ADP + phosphate + 5 H(+)(out). Its function is as follows. Produces ATP from ADP in the presence of a proton gradient across the membrane. The alpha chain is a regulatory subunit. This is ATP synthase subunit alpha from Bacteroides fragilis (strain ATCC 25285 / DSM 2151 / CCUG 4856 / JCM 11019 / LMG 10263 / NCTC 9343 / Onslow / VPI 2553 / EN-2).